The following is a 593-amino-acid chain: Melanopsin-A (593 aa).

The Extracellular portion of the chain corresponds to 1 to 77; the sequence is MMSGAAHSVR…VDVPDHAHYT (77 aa). Residues 78–98 traverse the membrane as a helical segment; it reads IGAVILTVGITGMLGNFLVIY. Residues 99-112 lie on the Cytoplasmic side of the membrane; the sequence is AFSRSRTLRTPANL. The helical transmembrane segment at 113–133 threads the bilayer; sequence FIINLAITDFLMCATQAPIFF. The Extracellular portion of the chain corresponds to 134-150; it reads TTSMHKRWIFGEKGCEL. Residues Cys-148 and Cys-226 are joined by a disulfide bond. The chain crosses the membrane as a helical span at residues 151 to 171; sequence YAFCGALFGICSMITLMVIAV. Residues 172–191 lie on the Cytoplasmic side of the membrane; sequence DRYFVITRPLASIGVLSQKR. The helical transmembrane segment at 192–212 threads the bilayer; it reads ALLILLVAWVYSLGWSLPPFF. Residues 213 to 243 are Extracellular-facing; that stretch reads GWSAYVPEGLLTSCTWDYMTFTPSVRAYTML. Residues 244 to 264 traverse the membrane as a helical segment; that stretch reads LFIFVFFIPLIVIIYCYFFIF. Over 265–300 the chain is Cytoplasmic; sequence RSIRTTNEAVGKINGDNKRDSMKRFQRLKNEWKMAK. The chain crosses the membrane as a helical span at residues 301 to 321; sequence IALIVILMYVISWSPYSTVAL. The Extracellular segment spans residues 322–336; the sequence is TAFAGYSDFLTPYMN. The helical transmembrane segment at 337–357 threads the bilayer; sequence SVPAVIAKASAIHNPIIYAIT. N6-(retinylidene)lysine is present on Lys-344. Over 358–593 the chain is Cytoplasmic; that stretch reads HPKYRLAIAK…HIDNHRPQYL (236 aa). Disordered stretches follow at residues 397–449 and 547–593; these read TVTS…RQVS and RSNV…PQYL. Positions 414-449 are enriched in polar residues; the sequence is TGKSRLSSASDSESGWTDTEADLSSMSSRPASRQVS. A compositionally biased stretch (basic and acidic residues) spans 581–593; it reads ESGHIDNHRPQYL.

Belongs to the G-protein coupled receptor 1 family. Opsin subfamily.

Its subcellular location is the cell membrane. In terms of biological role, photoreceptor implicated in non-image-forming responses to light. May be able to isomerize covalently bound all-trans retinal back to 11-cis retinal. This is Melanopsin-A (opn4a) from Danio rerio (Zebrafish).